The following is a 585-amino-acid chain: Protein FAM151A (585 aa).

The helical transmembrane segment at 14-34 (WVFAGITCVSVVVIAAIVLAI) threads the bilayer.

It belongs to the menorin family.

It is found in the membrane. The sequence is that of Protein FAM151A (FAM151A) from Homo sapiens (Human).